We begin with the raw amino-acid sequence, 215 residues long: Ribonuclease T (215 aa).

Positions 21-195 constitute an Exonuclease domain; that stretch reads VVIDVETAGF…YDSKKTAELF (175 aa). The Mg(2+) site is built by Asp-24, Glu-26, His-182, and Asp-187. Residue His-182 is the Proton donor/acceptor of the active site.

Belongs to the RNase T family. As to quaternary structure, homodimer. Mg(2+) serves as cofactor.

Trims short 3' overhangs of a variety of RNA species, leaving a one or two nucleotide 3' overhang. Responsible for the end-turnover of tRNA: specifically removes the terminal AMP residue from uncharged tRNA (tRNA-C-C-A). Also appears to be involved in tRNA biosynthesis. The sequence is that of Ribonuclease T from Wigglesworthia glossinidia brevipalpis.